The sequence spans 564 residues: MEEGTAMRKGGWWLALGMFSASALATCPDWPLARGRQETSRLHQQIVAWKEAYWRQGASGVSDDVYDQLTLRLAQWRQCFPGATPEDDDLPPPTGDARHPVAHTGVRKLADEDSVARWMKNKSDLWIQPKVDGVAVTLVYRQGRLVQAISRGDGLRGEAWTARARQIPALAKVMTGELADSVLQGELFLRRDGHVQQQTGGMNARAKVAGLMMRADAAAALSQLDVFIWAWPDGPSDMRRRQQLLAQAGFKYSGQYTHPVSRIEQVAQWRQRWYRSPLPFVSDGVIVREGREPPGRVWSPGKGEWLAAWKYPPASRVMQVRAIRFSIGRSGRLNVVAELEPQRLDDKRVQRVNVGSVSRWQMLDIGVGDQLQISLAGQGIPRVDAVVWRTAERHKPTPPPAKFNALTCYFATPECSEQFLSRLIWLSSKSALNVDGVGENLWRVIQQQNPMTHIFSWLALTVEQLQAVPGISAARGQHLWHQFDLVRKRPFIRWVLAMGIPVPQGALAQLESENWHLLAAKSEAQWRTLPGVGEIRARQLVAFLHHPDVVALAQWLSGQRIPGF.

The active-site N6-AMP-lysine intermediate is K130.

This sequence belongs to the NAD-dependent DNA ligase family. LigB subfamily.

It carries out the reaction NAD(+) + (deoxyribonucleotide)n-3'-hydroxyl + 5'-phospho-(deoxyribonucleotide)m = (deoxyribonucleotide)n+m + AMP + beta-nicotinamide D-nucleotide.. Functionally, catalyzes the formation of phosphodiester linkages between 5'-phosphoryl and 3'-hydroxyl groups in double-stranded DNA using NAD as a coenzyme and as the energy source for the reaction. The protein is DNA ligase B of Klebsiella pneumoniae subsp. pneumoniae (strain ATCC 700721 / MGH 78578).